Consider the following 376-residue polypeptide: Protein XRP2 (376 aa).

A disordered region spans residues 1–55 (MGCFFSKKSRRKSPKKDAALPTGDESATGNDLAETNNTALGSNSNQEAPKQYSWD). Gly-2 carries the N-myristoyl glycine lipid modification. A lipid anchor (S-palmitoyl cysteine) is attached at Cys-3. The span at 25-48 (ESATGNDLAETNNTALGSNSNQEA) shows a compositional bias: polar residues. The C-CAP/cofactor C-like domain occupies 49–204 (PKQYSWDKRE…NWSNIHDFTP (156 aa)). GTP-binding positions include 123–124 (GS) and 140–143 (QQFR).

Belongs to the TBCC family. Post-translationally, myristoylated on Gly-2; which may be required for membrane targeting. Palmitoylated on Cys-3; which may be required for plasma membrane targeting. In the retina, detected in both rod and cone photoreceptors (at protein level). Has strongest expression in the retinal outer nuclear layer (ONL) and weaker expression in the outer plexiform layer (OPL) and inner plexiform layer (IPL) (at protein level). Expressed in all tissues tested.

It is found in the cell membrane. Its subcellular location is the cell projection. It localises to the cilium. In terms of biological role, acts as a GTPase-activating protein (GAP) involved in trafficking between the Golgi and the ciliary membrane. Acts as a GTPase-activating protein (GAP) for tubulin in concert with tubulin-specific chaperone C, but does not enhance tubulin heterodimerization. In the retina, required for maintenance of rod and cone photoreceptor cells. May have a role in normal retinal localization of the transducins GNB1 and GNAT1, and the rhodopsin kinase GRK1. This Danio rerio (Zebrafish) protein is Protein XRP2.